Here is a 555-residue protein sequence, read N- to C-terminus: Glutamine--tRNA ligase (555 aa).

The 'HIGH' region motif lies at P34–H44. Residues E35–N37 and H41–S47 each bind ATP. Residues D67 and Y212 each contribute to the L-glutamine site. Residues T231, R261–L262, and M269–K271 each bind ATP. The short motif at V268–R272 is the 'KMSKS' region element. The interval T317–E324 is interaction with tRNA.

Belongs to the class-I aminoacyl-tRNA synthetase family. As to quaternary structure, monomer.

Its subcellular location is the cytoplasm. It catalyses the reaction tRNA(Gln) + L-glutamine + ATP = L-glutaminyl-tRNA(Gln) + AMP + diphosphate. The protein is Glutamine--tRNA ligase of Salmonella paratyphi B (strain ATCC BAA-1250 / SPB7).